Consider the following 452-residue polypeptide: Membrane-bound acylglycerophosphatidylinositol O-acyltransferase mboa-7 (452 aa).

4 helical membrane-spanning segments follow: residues 4–24, 53–73, 79–99, and 104–124; these read IIGLMSRDDWVYTGLLLFSFA, PRIAYSLGICAIAVGIQAFAP, FYVFLTTFTYLMFVRFAHYFL, and VASHTNVIQLIITLRIIGITF. N-linked (GlcNAc...) asparagine glycosylation occurs at N137. The next 3 helical transmembrane spans lie at 153-173, 220-240, and 244-264; these read FAYFYHFCGLFTGPYYTYQML, AIWEVSFFTRLVYAALIFVVF, and VYSAWAIAESICVILGIGIYP. N319 is a glycosylation site (N-linked (GlcNAc...) asparagine). H350 is an active-site residue. The chain crosses the membrane as a helical span at residues 354–374; that stretch reads AGYFMSFGVVAMCAILEDVIF. N-linked (GlcNAc...) asparagine glycosylation is present at N414. The helical transmembrane segment at 421-441 threads the bilayer; sequence FWSSIYYWLPLLCVPFYIYSV.

It belongs to the membrane-bound acyltransferase family.

Its subcellular location is the membrane. It catalyses the reaction a 1-acyl-sn-glycero-3-phospho-(1D-myo-inositol) + an acyl-CoA = a 1,2-diacyl-sn-glycero-3-phospho-(1D-myo-inositol) + CoA. It carries out the reaction a fatty acyl-[ACP] + a 1-acyl-sn-glycero-3-phosphate = a 1,2-diacyl-sn-glycero-3-phosphate + holo-[ACP]. It participates in lipid metabolism; phospholipid metabolism. Acyltransferase which mediates the conversion of lysophosphatidylinositol (1-acylglycerophosphatidylinositol or LPI) into phosphatidylinositol (1,2-diacyl-sn-glycero-3-phosphoinositol or PI) (LPIAT activity). Prefers arachidonoyl-CoA or eicosapentaenoic acid (EPA) as the acyl donor. Prefers sn-2-LPI rather than sn-1-LPI as the acyl acceptor. Lysophospholipid acyltransferases (LPLATs) catalyze the reacylation step of the phospholipid remodeling pathway also known as the Lands cycle. The sequence is that of Membrane-bound acylglycerophosphatidylinositol O-acyltransferase mboa-7 from Caenorhabditis briggsae.